Here is a 429-residue protein sequence, read N- to C-terminus: Glutamate-1-semialdehyde 2,1-aminomutase 1 (429 aa).

An N6-(pyridoxal phosphate)lysine modification is found at Lys-268.

The protein belongs to the class-III pyridoxal-phosphate-dependent aminotransferase family. HemL subfamily. In terms of assembly, homodimer. Requires pyridoxal 5'-phosphate as cofactor.

Its subcellular location is the cytoplasm. It carries out the reaction (S)-4-amino-5-oxopentanoate = 5-aminolevulinate. Its pathway is porphyrin-containing compound metabolism; protoporphyrin-IX biosynthesis; 5-aminolevulinate from L-glutamyl-tRNA(Glu): step 2/2. This Listeria monocytogenes serotype 4b (strain F2365) protein is Glutamate-1-semialdehyde 2,1-aminomutase 1.